We begin with the raw amino-acid sequence, 130 residues long: Small ribosomal subunit protein uS8 (130 aa).

It belongs to the universal ribosomal protein uS8 family.

The protein resides in the cytoplasm. This chain is Small ribosomal subunit protein uS8 (RPS15A), found in Brassica napus (Rape).